The chain runs to 241 residues: DNA repair protein RecO (241 aa).

Belongs to the RecO family.

Involved in DNA repair and RecF pathway recombination. The protein is DNA repair protein RecO of Orientia tsutsugamushi (strain Ikeda) (Rickettsia tsutsugamushi).